We begin with the raw amino-acid sequence, 379 residues long: Acyl-CoA dehydrogenase, short-chain specific (379 aa).

The protein belongs to the acyl-CoA dehydrogenase family. Requires FAD as cofactor.

It catalyses the reaction butanoyl-CoA + oxidized [electron-transfer flavoprotein] + H(+) = (2E)-butenoyl-CoA + reduced [electron-transfer flavoprotein]. The enzyme catalyses a short-chain 2,3-saturated fatty acyl-CoA + oxidized [electron-transfer flavoprotein] + H(+) = a short-chain (2E)-enoyl-CoA + reduced [electron-transfer flavoprotein]. It participates in lipid metabolism; butanoate metabolism. The protein is Acyl-CoA dehydrogenase, short-chain specific (bcd) of Clostridium acetobutylicum (strain ATCC 824 / DSM 792 / JCM 1419 / IAM 19013 / LMG 5710 / NBRC 13948 / NRRL B-527 / VKM B-1787 / 2291 / W).